A 265-amino-acid polypeptide reads, in one-letter code: Hydroxyethylthiazole kinase (265 aa).

Residue methionine 50 participates in substrate binding. 2 residues coordinate ATP: arginine 125 and threonine 171. Glycine 198 contacts substrate.

The protein belongs to the Thz kinase family. Mg(2+) is required as a cofactor.

It catalyses the reaction 5-(2-hydroxyethyl)-4-methylthiazole + ATP = 4-methyl-5-(2-phosphooxyethyl)-thiazole + ADP + H(+). Its pathway is cofactor biosynthesis; thiamine diphosphate biosynthesis; 4-methyl-5-(2-phosphoethyl)-thiazole from 5-(2-hydroxyethyl)-4-methylthiazole: step 1/1. In terms of biological role, catalyzes the phosphorylation of the hydroxyl group of 4-methyl-5-beta-hydroxyethylthiazole (THZ). In Salmonella choleraesuis (strain SC-B67), this protein is Hydroxyethylthiazole kinase.